Here is a 238-residue protein sequence, read N- to C-terminus: Ribonuclease PH (238 aa).

Residues arginine 86 and 124 to 126 (GTR) contribute to the phosphate site.

It belongs to the RNase PH family. As to quaternary structure, homohexameric ring arranged as a trimer of dimers.

It catalyses the reaction tRNA(n+1) + phosphate = tRNA(n) + a ribonucleoside 5'-diphosphate. Its function is as follows. Phosphorolytic 3'-5' exoribonuclease that plays an important role in tRNA 3'-end maturation. Removes nucleotide residues following the 3'-CCA terminus of tRNAs; can also add nucleotides to the ends of RNA molecules by using nucleoside diphosphates as substrates, but this may not be physiologically important. Probably plays a role in initiation of 16S rRNA degradation (leading to ribosome degradation) during starvation. The polypeptide is Ribonuclease PH (Solibacter usitatus (strain Ellin6076)).